The sequence spans 740 residues: F-BAR and double SH3 domains protein 2 (740 aa).

One can recognise an F-BAR domain in the interval 8-282 (VKVTQELRNI…NSSKVVRDYN (275 aa)). The disordered stretch occupies residues 303–323 (PCDSDTSRQLESETGTTEEHS). Positions 307–323 (DTSRQLESETGTTEEHS) are enriched in basic and acidic residues. The stretch at 356-397 (GVALSEQSRAELEQKIDEARESIRKAEIIKLKAEARLDLLKQ) forms a coiled coil. SH3 domains lie at 469–530 (NYPL…FPTS) and 567–629 (ASVC…ELSA). The interval 567–629 (ASVCFVKALY…PSVLVEELSA (63 aa)) is required and sufficient for location at clathrin-coated pits. Residues 629 to 645 (ASENGDTPWTREIQISP) are compositionally biased toward polar residues. The disordered stretch occupies residues 629-740 (ASENGDTPWT…KMEDVEITLV (112 aa)). A compositionally biased stretch (pro residues) spans 646–657 (SPKPHTSLPPLP). Residues Ser675 and Ser681 each carry the phosphoserine modification. Residues 675–706 (SQFFPRSPSANENSLHAESPGFSQASRQTPDT) show a composition bias toward polar residues.

Homodimer. Interacts (via SH3 domain 2) with ITSN1 (via SH3 domain 4). Recruited to clathrin-coated pits during a mid-to-late stage of assembly via interaction with ITSN1. Interacts (via SH3 domain 1) with WASL. Interacts with WAS. Interacts with CASK and MAGI1. CASK inhibits interaction with MAGI1. In terms of processing, phosphorylated. Phosphorylation on a Ser residue is important for recruitment to the cell membrane and for its role in promoting endocytosis. As to expression, detected in inner ear vestibula and in stereocilia in cochlear hair cell bundles (at protein level). Ubiquitous. Detected in testis, liver, brain cortex, cerebellum, kidney, organ of Corti, utricle, spiral ganglion, tongue and eye.

It is found in the cytoplasm. It localises to the cell junction. Its subcellular location is the membrane. The protein resides in the clathrin-coated pit. The protein localises to the cell membrane. It is found in the cell projection. It localises to the stereocilium. Adapter protein that plays a role in endocytosis via clathrin-coated pits. Contributes to the internalization of cell surface receptors, such as integrin ITGB1 and transferrin receptor. Promotes endocytosis of EGFR in cancer cells, and thereby contributes to the down-regulation of EGFR signaling. Recruited to clathrin-coated pits during a mid-to-late stage of assembly, where it is required for normal progress from U-shaped intermediate stage pits to terminal, omega-shaped pits. Binds to membranes enriched in phosphatidylinositol 3,4-bisphosphate or phosphatidylinositol 3,4,5-trisphosphate. When bound to membranes, promotes actin polymerization via its interaction with WAS and/or WASL which leads to the activation of the Arp2/3 complex. Does not promote actin polymerisation in the absence of membranes. This chain is F-BAR and double SH3 domains protein 2 (Fchsd2), found in Mus musculus (Mouse).